A 430-amino-acid polypeptide reads, in one-letter code: Glutamate-1-semialdehyde 2,1-aminomutase (430 aa).

Lys-270 is modified (N6-(pyridoxal phosphate)lysine).

It belongs to the class-III pyridoxal-phosphate-dependent aminotransferase family. HemL subfamily. Homodimer. Pyridoxal 5'-phosphate is required as a cofactor.

The protein localises to the cytoplasm. It carries out the reaction (S)-4-amino-5-oxopentanoate = 5-aminolevulinate. Its pathway is porphyrin-containing compound metabolism; protoporphyrin-IX biosynthesis; 5-aminolevulinate from L-glutamyl-tRNA(Glu): step 2/2. This is Glutamate-1-semialdehyde 2,1-aminomutase from Cupriavidus metallidurans (strain ATCC 43123 / DSM 2839 / NBRC 102507 / CH34) (Ralstonia metallidurans).